A 627-amino-acid polypeptide reads, in one-letter code: Carnitine O-acetyltransferase (627 aa).

Positions 1–30 (MDRKQKQAEKARPYGLLKPAALGKIPGRFQ) are excised as a propeptide. Position 94 is an N6-succinyllysine (lysine 94). Position 262 is an N6-acetyllysine; alternate (lysine 262). Lysine 262 bears the N6-succinyllysine; alternate mark. Lysine 269 is subject to N6-acetyllysine. The active-site Proton acceptor is the histidine 344. Residues lysine 420 and 424 to 431 (KSEKISPD) contribute to the CoA site. Residues tyrosine 453 and serine 455 each coordinate (R)-carnitine. Residue serine 457 participates in CoA binding. A (R)-carnitine-binding site is contributed by threonine 466. Glutamine 556 is a binding site for CoA. Residues 625 to 627 (SKL) carry the Microbody targeting signal motif.

The protein belongs to the carnitine/choline acetyltransferase family. Monomer.

The protein resides in the endoplasmic reticulum. Its subcellular location is the peroxisome. It localises to the mitochondrion inner membrane. It carries out the reaction (R)-carnitine + acetyl-CoA = O-acetyl-(R)-carnitine + CoA. The enzyme catalyses propanoyl-CoA + (R)-carnitine = O-propanoyl-(R)-carnitine + CoA. It catalyses the reaction butanoyl-CoA + (R)-carnitine = O-butanoyl-(R)-carnitine + CoA. The catalysed reaction is hexanoyl-CoA + (R)-carnitine = O-hexanoyl-(R)-carnitine + CoA. It carries out the reaction octanoyl-CoA + (R)-carnitine = O-octanoyl-(R)-carnitine + CoA. The enzyme catalyses decanoyl-CoA + (R)-carnitine = O-decanoyl-(R)-carnitine + CoA. It catalyses the reaction 3-methylbutanoyl-CoA + (R)-carnitine = O-3-methylbutanoyl-(R)-carnitine + CoA. The catalysed reaction is 2-methylpropanoyl-CoA + (R)-carnitine = O-isobutanoyl-(R)-carnitine + CoA. It carries out the reaction 2-methylbutanoyl-CoA + (R)-carnitine = O-2-methylbutanoyl-(R)-carnitine + CoA. The enzyme catalyses acetoacetyl-CoA + (R)-carnitine = O-3-oxobutanoyl-(R)-carnitine + CoA. It catalyses the reaction 3-hydroxybutanoyl-CoA + (R)-carnitine = O-3-hydroxybutanoyl-(R)-carnitine + CoA. The catalysed reaction is 4,8-dimethylnonanoyl-CoA + (R)-carnitine = O-4,8-dimethylnonanoyl-(R)-carnitine + CoA. It carries out the reaction 2,6-dimethylheptanoyl-CoA + (R)-carnitine = O-2,6-dimethylheptanoyl-(R)-carnitine + CoA. In terms of biological role, catalyzes the reversible transfer of acyl groups from carnitine to coenzyme A (CoA) and regulates the acyl-CoA/CoA ratio. Also plays a crucial role in the transport of fatty acids for beta-oxidation. Responsible for the synthesis of short- and branched-chain acylcarnitines. Active towards some branched-chain amino acid oxidation pathway (BCAAO) intermediates. Trans-2-enoyl-CoAs and 2-methylacyl-CoAs are poor substrates. This Columba livia (Rock dove) protein is Carnitine O-acetyltransferase (CRAT).